The sequence spans 203 residues: ATP-dependent Clp protease proteolytic subunit 2 (203 aa).

The active-site Nucleophile is the Ser98. His123 is a catalytic residue.

It belongs to the peptidase S14 family. In terms of assembly, fourteen ClpP subunits assemble into 2 heptameric rings which stack back to back to give a disk-like structure with a central cavity, resembling the structure of eukaryotic proteasomes.

It localises to the cytoplasm. The catalysed reaction is Hydrolysis of proteins to small peptides in the presence of ATP and magnesium. alpha-casein is the usual test substrate. In the absence of ATP, only oligopeptides shorter than five residues are hydrolyzed (such as succinyl-Leu-Tyr-|-NHMec, and Leu-Tyr-Leu-|-Tyr-Trp, in which cleavage of the -Tyr-|-Leu- and -Tyr-|-Trp bonds also occurs).. Functionally, cleaves peptides in various proteins in a process that requires ATP hydrolysis. Has a chymotrypsin-like activity. Plays a major role in the degradation of misfolded proteins. In Chlamydia trachomatis serovar A (strain ATCC VR-571B / DSM 19440 / HAR-13), this protein is ATP-dependent Clp protease proteolytic subunit 2.